The primary structure comprises 213 residues: Probable nicotinate-nucleotide adenylyltransferase (213 aa).

It belongs to the NadD family.

It carries out the reaction nicotinate beta-D-ribonucleotide + ATP + H(+) = deamido-NAD(+) + diphosphate. It participates in cofactor biosynthesis; NAD(+) biosynthesis; deamido-NAD(+) from nicotinate D-ribonucleotide: step 1/1. In terms of biological role, catalyzes the reversible adenylation of nicotinate mononucleotide (NaMN) to nicotinic acid adenine dinucleotide (NaAD). In Shigella boydii serotype 4 (strain Sb227), this protein is Probable nicotinate-nucleotide adenylyltransferase.